Reading from the N-terminus, the 219-residue chain is MSKAQAVRRIGILGGTFDPVHIGHLRSALEVAELMGLDELRLLPNARPPHRDTPQVAAQDRLAMVREAVQGVACLSVDARELERDKPSYTIDTLESIRAELAGNDQLFLVLGWDAFCGLPAWHRWEELLQHCHILVLQRPDADVEPPDELRNLLAARSESDPTAMSGPAGNISFVWQTPLAVSATQIRQLLASGKSVRFLVPDAVLAYIEAHELYRAPN.

This sequence belongs to the NadD family.

It carries out the reaction nicotinate beta-D-ribonucleotide + ATP + H(+) = deamido-NAD(+) + diphosphate. The protein operates within cofactor biosynthesis; NAD(+) biosynthesis; deamido-NAD(+) from nicotinate D-ribonucleotide: step 1/1. Its function is as follows. Catalyzes the reversible adenylation of nicotinate mononucleotide (NaMN) to nicotinic acid adenine dinucleotide (NaAD). The polypeptide is Probable nicotinate-nucleotide adenylyltransferase (Pseudomonas putida (strain GB-1)).